A 366-amino-acid polypeptide reads, in one-letter code: A-type ATP synthase subunit C (366 aa).

This sequence belongs to the V-ATPase V0D/AC39 subunit family. In terms of assembly, has multiple subunits with at least A(3), B(3), C, D, E, F, H, I and proteolipid K(x).

It localises to the cell membrane. Functionally, component of the A-type ATP synthase that produces ATP from ADP in the presence of a proton gradient across the membrane. The chain is A-type ATP synthase subunit C from Thermococcus onnurineus (strain NA1).